The primary structure comprises 766 residues: Serine/threonine-protein kinase B-raf (766 aa).

A compositionally biased stretch (gly residues) spans 1–13; sequence MAALSGGGGGGAE. The interval 1 to 38 is disordered; that stretch reads MAALSGGGGGGAEPGQALFNGDMEPEAGAGAGAAASSA. Ala-2 is modified (N-acetylalanine). At Ser-151 the chain carries Phosphoserine. In terms of domain architecture, RBD spans 155-227; the sequence is PIVRVFLPNK…TGEELHVEVL (73 aa). The segment at 234–280 adopts a Phorbol-ester/DAG-type zinc-finger fold; sequence THNFVRKTFFTLAFCDFCRKLLFQGFRCQTCGYKFHQRCSTEVPLMC. Zn(2+) contacts are provided by His-235, Cys-248, Cys-251, Cys-261, Cys-264, His-269, Cys-272, and Cys-280. The segment at 308–454 is disordered; sequence AETALTSGSS…DSSDDWEIPD (147 aa). The span at 314 to 341 shows a compositional bias: low complexity; the sequence is SGSSPSAPASDSIGPQILTSPSPSKSIP. At Ser-333 the chain carries Phosphoserine. Residues 348 to 363 show a composition bias toward basic and acidic residues; sequence PADEDHRNQFGQRDRS. A Phosphoserine; by SGK1 modification is found at Ser-365. Thr-373 is subject to Phosphothreonine; by autocatalysis. Residue Thr-396 is modified to Phosphothreonine. The residue at position 399 (Ser-399) is a Phosphoserine. Thr-401 is subject to Phosphothreonine. Over residues 423-447 the composition is skewed to basic and acidic residues; that stretch reads QRERKSSSSSEDRNRMKTLGRRDSS. Residues Ser-446 and Ser-447 each carry the phosphoserine modification. The region spanning 457–717 is the Protein kinase domain; the sequence is ITVGQRIGSG…PQILASIELL (261 aa). ATP contacts are provided by residues 463-471 and Lys-483; that span reads IGSGSFGTV. The active-site Proton acceptor is the Asp-576. A Glycyl lysine isopeptide (Lys-Gly) (interchain with G-Cter in ubiquitin) cross-link involves residue Lys-578. An Omega-N-methylarginine; by PRMT5 modification is found at Arg-671. Phosphoserine occurs at positions 729 and 750. Phosphothreonine; by MAPK1 is present on Thr-753.

It belongs to the protein kinase superfamily. TKL Ser/Thr protein kinase family. RAF subfamily. As to quaternary structure, monomer. Homodimer. Heterodimerizes with RAF1, and the heterodimer possesses a highly increased kinase activity compared to the respective homodimers or monomers. Heterodimerization is mitogen-regulated and enhanced by 14-3-3 proteins. MAPK1/ERK2 activation can induce a negative feedback that promotes the dissociation of the heterodimer by phosphorylating BRAF at Thr-753. Heterodimerizes (via N-terminus) with KSR1 (via N-terminus) or KSR2 (via N-terminus) in a MAP2K1-dependent manner. Interacts with MAP2K1 and MAP2K2. Found in a complex with at least BRAF, HRAS, MAP2K1, MAPK3 and RGS14. Interacts with RIT1. Interacts (via N-terminus) with RGS14 (via RBD domains); the interaction mediates the formation of a ternary complex with RAF1, a ternary complex inhibited by GNAI1. Interacts with DGKH. Interacts with PRMT5. Interacts with KSR2. Interacts with AKAP13, MAP2K1 and KSR1. Identified in a complex with AKAP13, MAP2K1 and KSR1. Interacts with FNIP1 and FNIP2. Zn(2+) serves as cofactor. Phosphorylation at Ser-365 by SGK1 inhibits its activity. Phosphorylation at Thr-753 by MAPK1. Dephosphorylation of Ser-365 by the SHOC2-MRAS-PP1c (SMP) complex consisting of SHOC2, GTP-bound M-Ras/MRAS and the catalytic subunit of protein phosphatase 1 (PPP1CA, PPP1CB or PPP1CC); this relieves inactivation and stimulates kinase activity. Post-translationally, methylation at Arg-671 decreases stability and kinase activity. In terms of processing, ubiquitinated by RNF149; which leads to proteasomal degradation. Polyubiquitinated at Lys-578 in response to EGF. As to expression, brain and testis.

The protein resides in the nucleus. Its subcellular location is the cytoplasm. It is found in the cell membrane. The catalysed reaction is L-seryl-[protein] + ATP = O-phospho-L-seryl-[protein] + ADP + H(+). The enzyme catalyses L-threonyl-[protein] + ATP = O-phospho-L-threonyl-[protein] + ADP + H(+). With respect to regulation, in quiescent cells, maintained in an inactive state via an intramolecular interaction between the protein kinase and N-terminal domains. Following mitogen-mediated cell activation, binds via its RGB domain to active HRAS (GTP-bound) which releases the inhibitory intramolecular interaction between the two domains. This allows the MAP2K1-mediated dimerization of KSR1 or KSR2, and BRAF which activates BRAF. In terms of biological role, protein kinase involved in the transduction of mitogenic signals from the cell membrane to the nucleus. Phosphorylates MAP2K1, and thereby activates the MAP kinase signal transduction pathway. Phosphorylates PFKFB2. May play a role in the postsynaptic responses of hippocampal neurons. This chain is Serine/threonine-protein kinase B-raf, found in Homo sapiens (Human).